Consider the following 78-residue polypeptide: MPMPKIADARALSDEELSQEIYAVKKELFELRLQQATRQLNQPHLIRLRKHKLAQLLTVESERKRGKSLSSTQTQKEE.

The interval 59–78 is disordered; sequence VESERKRGKSLSSTQTQKEE. Over residues 68 to 78 the composition is skewed to polar residues; that stretch reads SLSSTQTQKEE.

Belongs to the universal ribosomal protein uL29 family.

The sequence is that of Large ribosomal subunit protein uL29 from Synechococcus sp. (strain JA-3-3Ab) (Cyanobacteria bacterium Yellowstone A-Prime).